Here is a 185-residue protein sequence, read N- to C-terminus: Ribosome-recycling factor (185 aa).

This sequence belongs to the RRF family.

It localises to the cytoplasm. In terms of biological role, responsible for the release of ribosomes from messenger RNA at the termination of protein biosynthesis. May increase the efficiency of translation by recycling ribosomes from one round of translation to another. The protein is Ribosome-recycling factor of Novosphingobium aromaticivorans (strain ATCC 700278 / DSM 12444 / CCUG 56034 / CIP 105152 / NBRC 16084 / F199).